The primary structure comprises 444 residues: Protein kinase C and casein kinase substrate in neurons protein 1 (444 aa).

Ser2 and Ser79 each carry phosphoserine. The F-BAR domain occupies 13 to 283 (EETTDSFWEV…AIRGADAQDD (271 aa)). Residues 26–275 (KRTVKRIDDG…QVYRELEQAI (250 aa)) adopt a coiled-coil conformation. Thr184 carries the phosphothreonine modification. Positions 313–384 (AAKKEKQPKK…NGGSNPFDED (72 aa)) are disordered. The span at 314 to 324 (AKKEKQPKKAE) shows a compositional bias: basic and acidic residues. Residues 336-358 (ESTSQAGDRGSVSSYDRGQTYAT) show a composition bias toward polar residues. 5 positions are modified to phosphoserine: Ser346, Ser348, Ser349, Ser361, and Ser365. Residues 385 to 444 (AKGVRVRALYDYDGQEQDELSFKAGDELTKLGEEDEQGWCRGRLDSGQLGLYPANYVEVV) enclose the SH3 domain. Phosphotyrosine is present on Tyr394. A phosphoserine mark is found at Ser405 and Ser430.

It belongs to the PACSIN family. Homodimer. May form heterooligomers with other PACSINs. Interacts with MAPT. Interacts (via SH3 domain) with SYNJ1 and WASL. Interacts (via SH3 domain) with DNM1; the interaction is reduced by DNM1 phosphorylation. Interacts with DNM2 and DNM3. Interacts with both COBL and DBNL. Identified in a complex composed of COBL, PACSIN1 and WASL. Interacts with EHD1 and EHD3. Interacts with TRPV4. Phosphorylated by casein kinase 2 (CK2) and protein kinase C (PKC).

The protein localises to the cytoplasm. It localises to the cell projection. It is found in the synapse. The protein resides in the synaptosome. Its subcellular location is the ruffle membrane. The protein localises to the membrane. It localises to the cytoplasmic vesicle membrane. It is found in the cytosol. The protein resides in the cell membrane. Binds to membranes via its F-BAR domain and mediates membrane tubulation. Plays a role in the reorganization of the microtubule cytoskeleton via its interaction with MAPT; this decreases microtubule stability and inhibits MAPT-induced microtubule polymerization. Plays a role in cellular transport processes by recruiting DNM1, DNM2 and DNM3 to membranes. Plays a role in the reorganization of the actin cytoskeleton and in neuron morphogenesis via its interaction with COBL and WASL, and by recruiting COBL to the cell cortex. Plays a role in the regulation of neurite formation, neurite branching and the regulation of neurite length. Required for normal synaptic vesicle endocytosis; this process retrieves previously released neurotransmitters to accommodate multiple cycles of neurotransmission. Required for normal excitatory and inhibitory synaptic transmission. The polypeptide is Protein kinase C and casein kinase substrate in neurons protein 1 (PACSIN1) (Bos taurus (Bovine)).